The chain runs to 149 residues: 3-hydroxyacyl-[acyl-carrier-protein] dehydratase FabZ (149 aa).

Residue H48 is part of the active site.

It belongs to the thioester dehydratase family. FabZ subfamily.

The protein localises to the cytoplasm. The enzyme catalyses a (3R)-hydroxyacyl-[ACP] = a (2E)-enoyl-[ACP] + H2O. Functionally, involved in unsaturated fatty acids biosynthesis. Catalyzes the dehydration of short chain beta-hydroxyacyl-ACPs and long chain saturated and unsaturated beta-hydroxyacyl-ACPs. In Thermomicrobium roseum (strain ATCC 27502 / DSM 5159 / P-2), this protein is 3-hydroxyacyl-[acyl-carrier-protein] dehydratase FabZ.